A 143-amino-acid chain; its full sequence is UPF0292 protein Mbar_A0484 (143 aa).

Positions 28 to 109 constitute a Toprim domain; the sequence is GAIIIVEGKR…KPELEIRNKL (82 aa). Residues glutamate 34, aspartate 78, and aspartate 80 each coordinate Mg(2+).

The protein belongs to the UPF0292 family. It depends on Mg(2+) as a cofactor.

The protein is UPF0292 protein Mbar_A0484 of Methanosarcina barkeri (strain Fusaro / DSM 804).